Here is a 640-residue protein sequence, read N- to C-terminus: Fructose-1,6-bisphosphatase class 3 (640 aa).

The protein belongs to the FBPase class 3 family. Mn(2+) is required as a cofactor.

It carries out the reaction beta-D-fructose 1,6-bisphosphate + H2O = beta-D-fructose 6-phosphate + phosphate. It participates in carbohydrate biosynthesis; gluconeogenesis. This Lactococcus lactis subsp. lactis (strain IL1403) (Streptococcus lactis) protein is Fructose-1,6-bisphosphatase class 3.